The primary structure comprises 1340 residues: MPNITLLKRMLVFLLLNNYFINHFNCVKCKNLNTLCIHNTNLRKTVEVKRKEATKNQIKKEVNKSDKLNVQCSPPQNIYLSDRSEDKYYLNKNKNEIHIIHFGNGLHEKYENLPIENNNYNEIIISKYNTKNKENTEKDLYTKHINKRCYLNGNPINFKILTSLYKWINSKKLHKHIKSKSAKVDKQSPPYMSIYINYGFTKPKLLFINYLSTKYKNNGKNKYLKKYLRKYEELYEKYTYELDEQNDTDVISQNNREPMPNYSIDDFLIQNKNKNYKVTLVYDYISNLHNNEYQNVESVNNFIKNNELFDINEWKKNNKPYLIYKYKYKYKNPINKQIHFYEYDYYVPKLITYEEDISTEPKFVSPNLNSTKCYNNSPINFLTTSGFSSRNIDTFGKERNKIYSFNTPTDVKRNIYFNDLIKISSSYNQHFFHNLNFLLNLYTLQILIRDKTAIETDYIIDKFDQLKDKLIQLNTHNSLKHNNNNTKPSSQKYEERSSQDSGSFINSYYKTDQATPQNADYHYEDVNSPQTFVNFEDNIKLNGKISSDENLKKKENTKNEINDNYDNELDREISRHLTHKKNLFDDKIQIFKNKYNENILEDTDFIKLWKYDQNGEIIEALNQVPVPKIYLNIDAPKYCLWKILQNSGKNAYSEIPTPNRKLEAWRQQVNLKFFYKQNFDTSISLRNISKEELSNFKMKIVESTNQNEKHHSDQYTQINCQEHGKDNTQHDDKNNPNFRNYLNDKKTHKKNAESNILQTDKITYNVSTDEKRETQYDVKGNNPDTETNNEQSTVNKLKEKHKKAFYTLVVRDGIIDEILSDDISILKKLNQELKEKNESNEGKGNDLDATEQRENEQVGPNGEKKTTSKIFVGSFFNIKDPEVEYLINKELYFIPEHTNWYKKNTQPFVRGQIGKQSRKFDNDYPIYDYRKSDFGMAKFSALNLASIKDCAVLYLDKDIDLSDKFFHIIFISTSKNEDENLQNDQSYVVYENIPTDKQSPNLEKKQPSDEIYNEDEDHETSDNLLQNDQATNSNVEINHQDDKGNEPNSITNNIQKNNNYKKNEITNSIHNPITNPRLVLYIKENSKINIHESHISLNNNNGGMVNALSRIYLEQNSKVNHILSQELGKSAWYFHNVSVQNGINSNYKFVDILLGSLSSRVNLQIEGSQGSKQQSYGLSLLEGKQNISQYEMFHHEHSSMQTDQLFKSLVSDTAHSVWRSRGRIERNAIKAKLNTLCRSVLLNLGASAVAIPTLEIIPSDIEEANHGATISDLEEEPIFSLMSRGIDTNIARRIMMKAFVNEILEHVPDENLKNKVYQKIFKFSQKYKDESKKILRMTNL.

Positions 477-487 (NSLKHNNNNTK) are enriched in low complexity. Disordered stretches follow at residues 477–498 (NSLKHNNNNTKPSSQKYEERSS), 723–743 (HGKDNTQHDDKNNPNFRNYLN), 765–794 (NVSTDEKRETQYDVKGNNPDTETNNEQSTV), 835–865 (EKNESNEGKGNDLDATEQRENEQVGPNGEKK), and 992–1055 (NIPT…NNIQ). Residues 723-734 (HGKDNTQHDDKN) show a composition bias toward basic and acidic residues. Positions 782–794 (NPDTETNNEQSTV) are enriched in polar residues. A compositionally biased stretch (polar residues) spans 1022–1037 (DNLLQNDQATNSNVEI).

It belongs to the iron-sulfur cluster assembly SufBD family. In terms of assembly, component of a complex composed of SufB, SufC and SufD in a stoichiometric ratio of 1:2:1. Interacts with SufB. Interacts with SufC; the interaction enhances the ATPase activity of SufC.

It is found in the plastid. The protein localises to the apicoplast. Its pathway is cofactor biosynthesis; iron-sulfur cluster biosynthesis. Participates in the sulfur mobilization (SUF) pathway for iron-sulfur (Fe-S) cluster biogenesis. As part of a complex consisting of SufB-SufC(2)-SufD, involved in assembly of [4Fe-4S] clusters. Enhances the ATPase activity of SufC. The sequence is that of Iron-sulfur cluster assembly protein SufD from Plasmodium berghei (strain Anka).